We begin with the raw amino-acid sequence, 196 residues long: Large ribosomal subunit protein eL15 (196 aa).

2 disordered regions span residues 72–93 (SARK…TRIT) and 163–196 (GLTG…GKGK).

Belongs to the eukaryotic ribosomal protein eL15 family. As to quaternary structure, part of the 50S ribosomal subunit. Interacts with protein L7Ae and weakly with L44e.

The polypeptide is Large ribosomal subunit protein eL15 (rpl15e) (Haloarcula marismortui (strain ATCC 43049 / DSM 3752 / JCM 8966 / VKM B-1809) (Halobacterium marismortui)).